A 587-amino-acid polypeptide reads, in one-letter code: Aspartate--tRNA ligase (587 aa).

Glutamate 174 contacts L-aspartate. Positions 198 to 201 are aspartate; it reads QTFK. Arginine 220 contributes to the L-aspartate binding site. ATP contacts are provided by residues 220–222 and glutamine 229; that span reads RDE. Histidine 447 contacts L-aspartate. Glutamate 481 is an ATP binding site. Arginine 488 contacts L-aspartate. ATP is bound at residue 533–536; it reads GLDR.

This sequence belongs to the class-II aminoacyl-tRNA synthetase family. Type 1 subfamily. As to quaternary structure, homodimer.

The protein resides in the cytoplasm. The catalysed reaction is tRNA(Asp) + L-aspartate + ATP = L-aspartyl-tRNA(Asp) + AMP + diphosphate. Functionally, catalyzes the attachment of L-aspartate to tRNA(Asp) in a two-step reaction: L-aspartate is first activated by ATP to form Asp-AMP and then transferred to the acceptor end of tRNA(Asp). In Porphyromonas gingivalis (strain ATCC BAA-308 / W83), this protein is Aspartate--tRNA ligase.